The chain runs to 73 residues: UPF0235 protein HY04AAS1_1378 (73 aa).

It belongs to the UPF0235 family.

This Hydrogenobaculum sp. (strain Y04AAS1) protein is UPF0235 protein HY04AAS1_1378.